The chain runs to 316 residues: Endochitinase 2 (316 aa).

The N-terminal stretch at 1-18 is a signal peptide; the sequence is EFTTLFLLFSVLLLSASA. Residues 19–60 form the Chitin-binding type-1 domain; sequence EQCGSQAGGALCASGLCCSKFGWCGNTNDYCGPGNCQSQCPG. Disulfide bonds link Cys21/Cys36, Cys30/Cys42, Cys35/Cys49, Cys54/Cys58, Cys87/Cys150, Cys162/Cys170, and Cys269/Cys301. The active-site Proton donor is the Glu132. Positions 310–316 are cleaved as a propeptide — removed in mature form, vacuolar targeting; it reads GLLVDTV.

This sequence belongs to the glycosyl hydrolase 19 family. Chitinase class I subfamily.

The protein resides in the vacuole. It catalyses the reaction Random endo-hydrolysis of N-acetyl-beta-D-glucosaminide (1-&gt;4)-beta-linkages in chitin and chitodextrins.. In terms of biological role, defense against chitin-containing fungal pathogens. The sequence is that of Endochitinase 2 (CHTB2) from Solanum tuberosum (Potato).